We begin with the raw amino-acid sequence, 209 residues long: V-type ATP synthase subunit D (209 aa).

It belongs to the V-ATPase D subunit family.

Produces ATP from ADP in the presence of a proton gradient across the membrane. The chain is V-type ATP synthase subunit D from Thermoanaerobacter pseudethanolicus (strain ATCC 33223 / 39E) (Clostridium thermohydrosulfuricum).